The sequence spans 95 residues: Small ribosomal subunit protein bS6 (95 aa).

Belongs to the bacterial ribosomal protein bS6 family. In terms of assembly, part of the 30S ribosomal subunit.

Functionally, binds together with bS18 to 16S ribosomal RNA. This Bacillus subtilis (strain 168) protein is Small ribosomal subunit protein bS6 (rpsF).